The sequence spans 246 residues: 1-(5-phosphoribosyl)-5-[(5-phosphoribosylamino)methylideneamino] imidazole-4-carboxamide isomerase (246 aa).

Asp8 (proton acceptor) is an active-site residue. Asp131 functions as the Proton donor in the catalytic mechanism.

The protein belongs to the HisA/HisF family.

It localises to the cytoplasm. It carries out the reaction 1-(5-phospho-beta-D-ribosyl)-5-[(5-phospho-beta-D-ribosylamino)methylideneamino]imidazole-4-carboxamide = 5-[(5-phospho-1-deoxy-D-ribulos-1-ylimino)methylamino]-1-(5-phospho-beta-D-ribosyl)imidazole-4-carboxamide. It participates in amino-acid biosynthesis; L-histidine biosynthesis; L-histidine from 5-phospho-alpha-D-ribose 1-diphosphate: step 4/9. The chain is 1-(5-phosphoribosyl)-5-[(5-phosphoribosylamino)methylideneamino] imidazole-4-carboxamide isomerase from Polaromonas naphthalenivorans (strain CJ2).